We begin with the raw amino-acid sequence, 759 residues long: Rho GTPase-activating protein 26 (759 aa).

Positions 7 to 262 constitute a BAR domain; sequence EFSDCYLDSP…MKENPHEHLA (256 aa). In terms of domain architecture, PH spans 265-369; sequence PYTMEGYLYV…WMEAMDGREP (105 aa). The 186-residue stretch at 383–568 folds into the Rho-GAP domain; sequence AQLDNIGFSI…IIIENYEKMF (186 aa). The disordered stretch occupies residues 578–701; that stretch reads NSQLHLSRKR…STSSDSSPVS (124 aa). Residues 608–617 are compositionally biased toward basic and acidic residues; sequence HNTEKEEKRN. Positions 618-637 are enriched in low complexity; the sequence is SVNSSAESVSSSNANSSANS. Over residues 638-650 the composition is skewed to polar residues; that stretch reads TCTQCSNMNNLNA. Positions 679 to 701 are enriched in low complexity; sequence PMFSAPSSPMPTSSTSSDSSPVS. One can recognise an SH3 domain in the interval 701–759; it reads SVPRKAKALYACKAEHDSELSFSAGTVFDNVYPSQEPGWLEGILNGKTGLIPENYVEFL.

It localises to the cell junction. It is found in the focal adhesion. The protein localises to the cytoplasm. The protein resides in the cytoskeleton. Its subcellular location is the endosome membrane. Its function is as follows. GTPase-activating protein for rhoa and cdc42. In Xenopus tropicalis (Western clawed frog), this protein is Rho GTPase-activating protein 26 (arhgap26).